The sequence spans 142 residues: Hemoglobin subunit alpha (142 aa).

The 141-residue stretch at 2-142 (VLSAADKTNV…VSTVLTSKYR (141 aa)) folds into the Globin domain. A Phosphoserine modification is found at Ser4. Lys8 bears the N6-succinyllysine mark. Residue Thr9 is modified to Phosphothreonine. Lys12 carries the post-translational modification N6-succinyllysine. Lys17 carries the N6-acetyllysine; alternate modification. Residue Lys17 is modified to N6-succinyllysine; alternate. At Lys41 the chain carries N6-succinyllysine. Ser50 bears the Phosphoserine mark. His59 lines the O2 pocket. A heme b-binding site is contributed by His88. A Phosphoserine modification is found at Ser103. Position 109 is a phosphothreonine (Thr109). Residues Ser125 and Ser132 each carry the phosphoserine modification. A phosphothreonine mark is found at Thr135 and Thr138. Position 139 is a phosphoserine (Ser139).

This sequence belongs to the globin family. In terms of assembly, heterotetramer of two alpha chains and two beta chains. Red blood cells.

In terms of biological role, involved in oxygen transport from the lung to the various peripheral tissues. Functionally, hemopressin acts as an antagonist peptide of the cannabinoid receptor CNR1. Hemopressin-binding efficiently blocks cannabinoid receptor CNR1 and subsequent signaling. The sequence is that of Hemoglobin subunit alpha (HBA) from Equus przewalskii (Przewalski's horse).